The chain runs to 433 residues: Pyroglutamylated RF-amide peptide receptor (433 aa).

Residues 1-46 lie on the Extracellular side of the membrane; it reads MQALNITAEQFSRLLSAHNLTREQFIHRYGLRPLVYTPELPARAKL. N-linked (GlcNAc...) asparagine glycans are attached at residues asparagine 5 and asparagine 19. Residues 47-67 form a helical membrane-spanning segment; that stretch reads AFALAGALIFALALFGNSLVI. At 68 to 81 the chain is on the cytoplasmic side; that stretch reads YVVTRSKAMRTVTN. Residues 82-102 form a helical membrane-spanning segment; it reads IFICSLALSDLLIAFFCIPVT. Over 103-120 the chain is Extracellular; the sequence is MLQNISDKWLGGAFICKM. Residues 121-141 form a helical membrane-spanning segment; sequence VPFVQSTAVVTEILTMTCIAV. The Cytoplasmic portion of the chain corresponds to 142–162; the sequence is ERHQGLIHPFKMKWQYTTRRA. Residues 163-183 form a helical membrane-spanning segment; that stretch reads FTILGVVWLAAIIVGSPMWHV. Over 184–212 the chain is Extracellular; that stretch reads QRLEIKYDFLYEKEHVCCLEEWASPMHQR. The chain crosses the membrane as a helical span at residues 213–233; sequence IYTTFILVILFLLPLVVMLVL. The Cytoplasmic portion of the chain corresponds to 234 to 271; that stretch reads YSKIGYELWIKKRVGDSSALQTIHGKEMSKIARKKKRA. The helical transmembrane segment at 272–292 threads the bilayer; sequence VVMMVTVVALFAACWAPFHVV. The Extracellular portion of the chain corresponds to 293–313; that stretch reads HMMVEYSNFEKEYDDVTIKMV. Residues 314–334 form a helical membrane-spanning segment; it reads FAVAQTIGFFNSICNPFVYAF. Topologically, residues 335–433 are cytoplasmic; the sequence is MNENFKKNFL…NSTFGSGHEL (99 aa).

This sequence belongs to the G-protein coupled receptor 1 family. Expressed widely in the brain with high levels in the cortex and hypothalamus, and moderate levels in the brain stem, caudate nucleus, midbrain hippocampus, thalamus, trigeminal ganglia and spinal cord. Particularly strong expression detected in the mitral cell layer of the olfactory bulb, accessory olfactory bulb, island of Calleja and nucleus of the solitary tract. In peripheral tissues, expressed at moderate levels in the eye, liver, kidney, pituitary gland, testis and thymus.

The protein resides in the cell membrane. Functionally, receptor for the orexigenic neuropeptide QRFP. The activity of this receptor is mediated by G proteins that modulate adenylate cyclase activity and intracellular calcium levels. The sequence is that of Pyroglutamylated RF-amide peptide receptor (Qrfpr) from Mus musculus (Mouse).